Reading from the N-terminus, the 446-residue chain is D(1A) dopamine receptor (446 aa).

At 1–22 the chain is on the extracellular side; sequence MPLNDTTMDRRGLVVERDFSFR. N-linked (GlcNAc...) asparagine glycosylation occurs at Asn-4. Residues 23–48 traverse the membrane as a helical segment; the sequence is ILTACFLSLLILSTLLGNTLVCAAVI. The Cytoplasmic segment spans residues 49–59; it reads RFRHLRSKVTN. Residues 60–86 form a helical membrane-spanning segment; sequence FFVISLAVSDLLVAVLVMPWKAVAEIA. Residues 87–95 are Extracellular-facing; it reads GFWPFGSFC. Cys-95 and Cys-185 form a disulfide bridge. The chain crosses the membrane as a helical span at residues 96 to 118; it reads NIWVAFDIMCSTASILNLCVISV. Residues 119–137 are Cytoplasmic-facing; the sequence is DRYWAISSPFRYERKMTPK. Residues 138–162 form a helical membrane-spanning segment; sequence AAFILISVAWTLSVLISFIPVQLNW. Residues 163–191 are Extracellular-facing; sequence HKARPLSSPDGNVSSQDETMDNCDSSLSR. A helical transmembrane segment spans residues 192-217; that stretch reads TYAISSSLISFYIPVAIMIVTYTRIY. Over 218–271 the chain is Cytoplasmic; that stretch reads RIAQKQIRRISALERAAVHAKNCQNTTGNGANVECSQPESSFKMSFKRETKVLK. Residues 272–298 form a helical membrane-spanning segment; sequence TLSVIMGVFVCCWLPFFILNCMVPFCE. The Extracellular portion of the chain corresponds to 299–315; sequence SDLPSGETKPFCIDSIT. A helical transmembrane segment spans residues 316–340; sequence FDVFVWFGWANSSLNPIIYAFNADF. At 341 to 446 the chain is on the cytoplasmic side; it reads RKAFSTLLGC…PITQNGQHKT (106 aa). S-palmitoyl cysteine attachment occurs at residues Cys-350 and Cys-354.

Belongs to the G-protein coupled receptor 1 family. In terms of assembly, interacts with DNAJC14 via its C-terminus.

It localises to the cell membrane. The protein resides in the endoplasmic reticulum membrane. The protein localises to the cell projection. It is found in the cilium membrane. Its subcellular location is the dendrite. It localises to the dendritic spine. Its function is as follows. This is one of the five types (D1 to D5) of receptors for dopamine. The activity of this receptor is mediated by G proteins which activate adenylyl cyclase. The protein is D(1A) dopamine receptor (DRD1) of Didelphis virginiana (North American opossum).